A 271-amino-acid chain; its full sequence is Formamidopyrimidine-DNA glycosylase (271 aa).

P2 functions as the Schiff-base intermediate with DNA in the catalytic mechanism. The Proton donor role is filled by E3. K56 (proton donor; for beta-elimination activity) is an active-site residue. DNA is bound by residues H89, R107, and R151. The FPG-type zinc finger occupies 236 to 270 (MVYDRAGLPCRVCAAPIKSIRQGQRSSFYCATCQK). R260 functions as the Proton donor; for delta-elimination activity in the catalytic mechanism.

It belongs to the FPG family. As to quaternary structure, monomer. Zn(2+) serves as cofactor.

The enzyme catalyses Hydrolysis of DNA containing ring-opened 7-methylguanine residues, releasing 2,6-diamino-4-hydroxy-5-(N-methyl)formamidopyrimidine.. It carries out the reaction 2'-deoxyribonucleotide-(2'-deoxyribose 5'-phosphate)-2'-deoxyribonucleotide-DNA = a 3'-end 2'-deoxyribonucleotide-(2,3-dehydro-2,3-deoxyribose 5'-phosphate)-DNA + a 5'-end 5'-phospho-2'-deoxyribonucleoside-DNA + H(+). Its function is as follows. Involved in base excision repair of DNA damaged by oxidation or by mutagenic agents. Acts as a DNA glycosylase that recognizes and removes damaged bases. Has a preference for oxidized purines, such as 7,8-dihydro-8-oxoguanine (8-oxoG). Has AP (apurinic/apyrimidinic) lyase activity and introduces nicks in the DNA strand. Cleaves the DNA backbone by beta-delta elimination to generate a single-strand break at the site of the removed base with both 3'- and 5'-phosphates. The chain is Formamidopyrimidine-DNA glycosylase from Polaromonas naphthalenivorans (strain CJ2).